Reading from the N-terminus, the 395-residue chain is Chorismate synthase (395 aa).

Residues arginine 40 and arginine 46 each contribute to the NADP(+) site. FMN is bound by residues arginine 137–serine 139, glycine 308, lysine 323–threonine 327, and arginine 349.

This sequence belongs to the chorismate synthase family. In terms of assembly, homotetramer. Requires FMNH2 as cofactor.

The catalysed reaction is 5-O-(1-carboxyvinyl)-3-phosphoshikimate = chorismate + phosphate. Its pathway is metabolic intermediate biosynthesis; chorismate biosynthesis; chorismate from D-erythrose 4-phosphate and phosphoenolpyruvate: step 7/7. Its function is as follows. Catalyzes the anti-1,4-elimination of the C-3 phosphate and the C-6 proR hydrogen from 5-enolpyruvylshikimate-3-phosphate (EPSP) to yield chorismate, which is the branch point compound that serves as the starting substrate for the three terminal pathways of aromatic amino acid biosynthesis. This reaction introduces a second double bond into the aromatic ring system. The protein is Chorismate synthase of Gloeobacter violaceus (strain ATCC 29082 / PCC 7421).